We begin with the raw amino-acid sequence, 229 residues long: Heptaprenylglyceryl phosphate synthase (229 aa).

Lys-12 lines the sn-glycerol 1-phosphate pocket. The Mg(2+) site is built by Asp-14 and Ser-40. Residues 159–164, Gly-189, and 209–210 contribute to the sn-glycerol 1-phosphate site; these read YLEYSG and GN.

This sequence belongs to the GGGP/HepGP synthase family. Group I subfamily. Homodimer. Mg(2+) is required as a cofactor.

The catalysed reaction is sn-glycerol 1-phosphate + all-trans-heptaprenyl diphosphate = 3-heptaprenyl-sn-glycero-1-phosphate + diphosphate. It functions in the pathway membrane lipid metabolism; glycerophospholipid metabolism. Functionally, prenyltransferase that catalyzes in vivo the transfer of the heptaprenyl moiety of heptaprenyl pyrophosphate (HepPP; 35 carbon atoms) to the C3 hydroxyl of sn-glycerol-1-phosphate (G1P), producing heptaprenylglyceryl phosphate (HepGP). This reaction is an ether-bond-formation step in the biosynthesis of archaea-type G1P-based membrane lipids found in Bacillales. The sequence is that of Heptaprenylglyceryl phosphate synthase from Bacillus mycoides (strain KBAB4) (Bacillus weihenstephanensis).